A 659-amino-acid chain; its full sequence is DNA ligase (659 aa).

NAD(+) contacts are provided by residues D32–D36, S81–L82, and E111. K113 functions as the N6-AMP-lysine intermediate in the catalytic mechanism. R134, E168, K280, and K304 together coordinate NAD(+). Positions 398, 401, 416, and 421 each coordinate Zn(2+). Positions E585 to E655 constitute a BRCT domain.

This sequence belongs to the NAD-dependent DNA ligase family. LigA subfamily. It depends on Mg(2+) as a cofactor. Requires Mn(2+) as cofactor.

It catalyses the reaction NAD(+) + (deoxyribonucleotide)n-3'-hydroxyl + 5'-phospho-(deoxyribonucleotide)m = (deoxyribonucleotide)n+m + AMP + beta-nicotinamide D-nucleotide.. Functionally, DNA ligase that catalyzes the formation of phosphodiester linkages between 5'-phosphoryl and 3'-hydroxyl groups in double-stranded DNA using NAD as a coenzyme and as the energy source for the reaction. It is essential for DNA replication and repair of damaged DNA. The polypeptide is DNA ligase (Mycoplasma genitalium (strain ATCC 33530 / DSM 19775 / NCTC 10195 / G37) (Mycoplasmoides genitalium)).